The chain runs to 361 residues: S-adenosylmethionine decarboxylase proenzyme (361 aa).

Catalysis depends on residues E11 and E14. The active-site Schiff-base intermediate with substrate; via pyruvic acid is the S71. Residue S71 is modified to Pyruvic acid (Ser); by autocatalysis. The active-site Proton donor; for catalytic activity is C85. Residues S234 and H247 each act as proton acceptor; for processing activity in the active site.

The protein belongs to the eukaryotic AdoMetDC family. Pyruvate is required as a cofactor. Post-translationally, is synthesized initially as an inactive proenzyme. Formation of the active enzyme involves a self-maturation process in which the active site pyruvoyl group is generated from an internal serine residue via an autocatalytic post-translational modification. Two non-identical subunits are generated from the proenzyme in this reaction, and the pyruvate is formed at the N-terminus of the alpha chain, which is derived from the carboxyl end of the proenzyme. The post-translation cleavage follows an unusual pathway, termed non-hydrolytic serinolysis, in which the side chain hydroxyl group of the serine supplies its oxygen atom to form the C-terminus of the beta chain, while the remainder of the serine residue undergoes an oxidative deamination to produce ammonia and the pyruvoyl group blocking the N-terminus of the alpha chain.

It catalyses the reaction S-adenosyl-L-methionine + H(+) = S-adenosyl 3-(methylsulfanyl)propylamine + CO2. It functions in the pathway amine and polyamine biosynthesis; S-adenosylmethioninamine biosynthesis; S-adenosylmethioninamine from S-adenosyl-L-methionine: step 1/1. The protein is S-adenosylmethionine decarboxylase proenzyme (SAMDC) of Daucus carota (Wild carrot).